The following is a 256-amino-acid chain: MSVRLSYGASLASIPRCFDLKSSKITVMGDDHSGKTSLVRSWLGSSFQISDANRYRVSDLYHKTIQFDTLVKYYRTFGVKGQLPNYAGFKAKNSGTIYESCGNFLEERLINANKSTAQRRTSIDVQVFDTNQMEVSYLSELTTLQIRQSDAIILCFDSTNDSSLASLESYICIIHHVRLECELDIPIIIACTKCDLDSERTITHEKVLTFIQELGFSPGNLDYFETSSKFNVNVEDLFLAVLLKIEKSKSDRRKLL.

29–36 lines the ATP pocket; the sequence is GDDHSGKT.

This is an uncharacterized protein from Saccharomyces cerevisiae (strain ATCC 204508 / S288c) (Baker's yeast).